We begin with the raw amino-acid sequence, 139 residues long: MTDEDRLLPIANVGRLMKQILPSNAKISKEAKQTVQECATEFISFVTCEASEKCHRENRKTVNGDDIWWALSTLGLDNYADAVGRHLHKYREAERERTEHNKGSNDSGNEKETNTRSDVQNQSTKFIRVVEKGSSSSAR.

The DNA-binding element occupies 8-14 (LPIANVG). The segment at 35 to 46 (VQECATEFISFV) is subunit association domain (SAD). Over residues 90–115 (YREAERERTEHNKGSNDSGNEKETNT) the composition is skewed to basic and acidic residues. Residues 90-139 (YREAERERTEHNKGSNDSGNEKETNTRSDVQNQSTKFIRVVEKGSSSSAR) form a disordered region. Positions 116 to 125 (RSDVQNQSTK) are enriched in polar residues.

The protein belongs to the NFYB/HAP3 subunit family. Heterotrimeric transcription factor composed of three components, NF-YA, NF-YB and NF-YC. NF-YB and NF-YC must interact and dimerize for NF-YA association and DNA binding. In terms of tissue distribution, expressed in flowers, siliques and young rosettes.

It is found in the nucleus. Component of the NF-Y/HAP transcription factor complex. The NF-Y complex stimulates the transcription of various genes by recognizing and binding to a CCAAT motif in promoters. In Arabidopsis thaliana (Mouse-ear cress), this protein is Nuclear transcription factor Y subunit B-4 (NFYB4).